The primary structure comprises 140 residues: ATP synthase epsilon chain (140 aa).

This sequence belongs to the ATPase epsilon chain family. As to quaternary structure, F-type ATPases have 2 components, CF(1) - the catalytic core - and CF(0) - the membrane proton channel. CF(1) has five subunits: alpha(3), beta(3), gamma(1), delta(1), epsilon(1). CF(0) has three main subunits: a, b and c.

It localises to the cell inner membrane. Its function is as follows. Produces ATP from ADP in the presence of a proton gradient across the membrane. In Saccharophagus degradans (strain 2-40 / ATCC 43961 / DSM 17024), this protein is ATP synthase epsilon chain.